Reading from the N-terminus, the 191-residue chain is Transcriptional regulator MET32 (191 aa).

The segment at 70–96 (KKENALPKPPKSSKSKPQDRRNSTGEK) is disordered. Positions 85-96 (KPQDRRNSTGEK) are enriched in basic and acidic residues. The C2H2-type 1 zinc-finger motif lies at 98 to 120 (FKCAKCSLEFSRSSDLRRHEKTH). The C2H2-type 2; atypical zinc-finger motif lies at 126 to 150 (NICPQCGKGFARKDALKRHYDTLTC).

As to quaternary structure, interacts with MET4 and MET28.

It localises to the cytoplasm. It is found in the nucleus. Functionally, auxiliary transcriptional regulator of sulfur amino acid metabolism. Involved in the transcriptional activation of MET28. This Saccharomyces cerevisiae (strain ATCC 204508 / S288c) (Baker's yeast) protein is Transcriptional regulator MET32 (MET32).